A 642-amino-acid chain; its full sequence is Chaperone protein DnaK (642 aa).

Phosphothreonine; by autocatalysis is present on Thr-198. A disordered region spans residues 602–642 (AYAKMTEKQQSDDGAGTQNADHKEDDVVDADFEEVKSDKKD).

The protein belongs to the heat shock protein 70 family.

In terms of biological role, acts as a chaperone. This chain is Chaperone protein DnaK, found in Dichelobacter nodosus (strain VCS1703A).